We begin with the raw amino-acid sequence, 281 residues long: Acetyl-coenzyme A carboxylase carboxyl transferase subunit beta (281 aa).

One can recognise a CoA carboxyltransferase N-terminal domain in the interval 24–281 (GLWYKSPKGK…TKLLTMLANN (258 aa)).

Belongs to the AccD/PCCB family. Acetyl-CoA carboxylase is a heterohexamer composed of biotin carboxyl carrier protein (AccB), biotin carboxylase (AccC) and two subunits each of ACCase subunit alpha (AccA) and ACCase subunit beta (AccD).

The protein localises to the cytoplasm. The enzyme catalyses N(6)-carboxybiotinyl-L-lysyl-[protein] + acetyl-CoA = N(6)-biotinyl-L-lysyl-[protein] + malonyl-CoA. It participates in lipid metabolism; malonyl-CoA biosynthesis; malonyl-CoA from acetyl-CoA: step 1/1. Component of the acetyl coenzyme A carboxylase (ACC) complex. Biotin carboxylase (BC) catalyzes the carboxylation of biotin on its carrier protein (BCCP) and then the CO(2) group is transferred by the transcarboxylase to acetyl-CoA to form malonyl-CoA. This Amoebophilus asiaticus (strain 5a2) protein is Acetyl-coenzyme A carboxylase carboxyl transferase subunit beta.